Here is a 197-residue protein sequence, read N- to C-terminus: Carnitine operon protein CaiE (197 aa).

Belongs to the transferase hexapeptide repeat family.

The protein operates within amine and polyamine metabolism; carnitine metabolism. Functionally, overproduction of CaiE stimulates the activity of CaiB and CaiD. The protein is Carnitine operon protein CaiE of Citrobacter koseri (strain ATCC BAA-895 / CDC 4225-83 / SGSC4696).